A 235-amino-acid polypeptide reads, in one-letter code: High affinity immunoglobulin epsilon receptor subunit beta (235 aa).

Residues 1 to 23 (MDTENRSRADLALPNPQESSSAP) are disordered. The Cytoplasmic portion of the chain corresponds to 1-51 (MDTENRSRADLALPNPQESSSAPDIELLEASPAKAAPPKQTWRTFLKKELE). A helical membrane pass occupies residues 52-71 (FLGATQILVGLICLCFGTIV). Over 72–89 (CSVLYVSDFDEEVLLLYK) the chain is Extracellular. The helical transmembrane segment at 90-109 (LGYPFWGAVLFVLSGFLSII) threads the bilayer. Residues 110–122 (SERKNTLYLVRGS) lie on the Cytoplasmic side of the membrane. Residues 123-142 (LGANIVSSIAAGTGIAMLIL) form a helical membrane-spanning segment. The Extracellular segment spans residues 143 to 171 (NLTNNFAYMNNCKNVTEDDGCFVASFTTE). The chain crosses the membrane as a helical span at residues 172-191 (LVLMMLFLTILAFCSAVLFT). Residues 192–235 (IYRIGQELESKKVPDDRLYEELNVYSPIYSELEDKGETSSPVDS) are Cytoplasmic-facing. Phosphotyrosine occurs at positions 210 and 216. A Phosphoserine modification is found at Ser-217. At Tyr-220 the chain carries Phosphotyrosine.

Belongs to the MS4A family. In terms of assembly, tetramer of an alpha chain, a beta chain, and two disulfide linked gamma chains. Binds LILRB1. Interacts with FGR. Interacts with FGR and FES/FPS. Interacts with LYN. In terms of processing, phosphorylated on tyrosine residues by LYN.

The protein resides in the membrane. Functionally, high affinity receptor that binds to the Fc region of immunoglobulins epsilon. Aggregation of FCER1 by multivalent antigens is required for the full mast cell response, including the release of preformed mediators (such as histamine) by degranulation and de novo production of lipid mediators and cytokines. Also mediates the secretion of important lymphokines. Binding of allergen to receptor-bound IgE leads to cell activation and the release of mediators responsible for the manifestations of allergy. The protein is High affinity immunoglobulin epsilon receptor subunit beta (Ms4a2) of Mus musculus (Mouse).